A 351-amino-acid polypeptide reads, in one-letter code: MTTPPPPSTTPLTYRDAGVDIDAGNALVERIKPLVKRTFRPEVMSGLGGFGALFNLAGKYKEPVLVSGTDGVGTKLKLAQQLNRHNTIGIDLVAMCVNDVLVQGAEPLFFLDYFATGKLDIDTATAVISGIALGCEQSGCALIGGETAEMPDMYPPGEYDLAGFCVAAVEKSQLLDGSQVREDDVLIGIASSGPHSNGYSLIRRIYERAGSPADLDIHGTRLIDTLMAPTALYVKPILKLLHTHSDAIHAMAHITGGGLTENIIRVIPPNLGLRIDANAWTQPPVFQWLQREGALADTEMWRTFNCGIGFVLVATPNQVAPLGQALDNQGLAHWQIGRVVTPVDNERVHIG.

It belongs to the AIR synthase family.

The protein resides in the cytoplasm. The catalysed reaction is 2-formamido-N(1)-(5-O-phospho-beta-D-ribosyl)acetamidine + ATP = 5-amino-1-(5-phospho-beta-D-ribosyl)imidazole + ADP + phosphate + H(+). It functions in the pathway purine metabolism; IMP biosynthesis via de novo pathway; 5-amino-1-(5-phospho-D-ribosyl)imidazole from N(2)-formyl-N(1)-(5-phospho-D-ribosyl)glycinamide: step 2/2. In Xylella fastidiosa (strain Temecula1 / ATCC 700964), this protein is Phosphoribosylformylglycinamidine cyclo-ligase.